The primary structure comprises 166 residues: Small ribosomal subunit protein uS5 (166 aa).

Positions Leu-11–Val-74 constitute an S5 DRBM domain.

This sequence belongs to the universal ribosomal protein uS5 family. In terms of assembly, part of the 30S ribosomal subunit. Contacts proteins S4 and S8.

In terms of biological role, with S4 and S12 plays an important role in translational accuracy. Functionally, located at the back of the 30S subunit body where it stabilizes the conformation of the head with respect to the body. The polypeptide is Small ribosomal subunit protein uS5 (Chromohalobacter salexigens (strain ATCC BAA-138 / DSM 3043 / CIP 106854 / NCIMB 13768 / 1H11)).